Here is a 251-residue protein sequence, read N- to C-terminus: Triosephosphate isomerase (251 aa).

Asparagine 9 to lysine 11 is a substrate binding site. Histidine 96 functions as the Electrophile in the catalytic mechanism. The Proton acceptor role is filled by glutamate 168. Substrate-binding positions include glycine 174, serine 214, and glycine 235–glycine 236.

This sequence belongs to the triosephosphate isomerase family. As to quaternary structure, homodimer.

Its subcellular location is the cytoplasm. The catalysed reaction is D-glyceraldehyde 3-phosphate = dihydroxyacetone phosphate. It functions in the pathway carbohydrate biosynthesis; gluconeogenesis. The protein operates within carbohydrate degradation; glycolysis; D-glyceraldehyde 3-phosphate from glycerone phosphate: step 1/1. Its function is as follows. Involved in the gluconeogenesis. Catalyzes stereospecifically the conversion of dihydroxyacetone phosphate (DHAP) to D-glyceraldehyde-3-phosphate (G3P). This chain is Triosephosphate isomerase, found in Porphyromonas gingivalis (strain ATCC BAA-308 / W83).